Here is a 72-residue protein sequence, read N- to C-terminus: Crustacean hyperglycemic hormone (72 aa).

The residue at position 1 (glutamine 1) is a Pyrrolidone carboxylic acid; partial. Cystine bridges form between cysteine 7–cysteine 43, cysteine 23–cysteine 39, and cysteine 26–cysteine 52. Valine 72 carries the post-translational modification Valine amide.

It belongs to the arthropod CHH/MIH/GIH/VIH hormone family. In terms of processing, the N-terminus forms pyrrolidone carboxylic acid in isoform CHH-II and is free in isoform CHH-I. As to expression, produced by the medulla terminalis X-organ in the eyestalks and transported to the sinus gland where they are stored and released.

Its subcellular location is the secreted. In terms of biological role, hormone found in the sinus gland of isopods and decapods which controls the blood sugar level. Has a secretagogue action over the amylase released from the midgut gland. May act as a stress hormone and may be involved in the control of molting and reproduction. The protein is Crustacean hyperglycemic hormone of Cancer pagurus (Rock crab).